The following is a 407-amino-acid chain: 4-hydroxy-3-methylbut-2-en-1-yl diphosphate synthase (ferredoxin) (407 aa).

Residues C312, C315, C346, and E353 each coordinate [4Fe-4S] cluster.

It belongs to the IspG family. It depends on [4Fe-4S] cluster as a cofactor.

The catalysed reaction is (2E)-4-hydroxy-3-methylbut-2-enyl diphosphate + 2 oxidized [2Fe-2S]-[ferredoxin] + H2O = 2-C-methyl-D-erythritol 2,4-cyclic diphosphate + 2 reduced [2Fe-2S]-[ferredoxin] + H(+). It participates in isoprenoid biosynthesis; isopentenyl diphosphate biosynthesis via DXP pathway; isopentenyl diphosphate from 1-deoxy-D-xylulose 5-phosphate: step 5/6. Converts 2C-methyl-D-erythritol 2,4-cyclodiphosphate (ME-2,4cPP) into 1-hydroxy-2-methyl-2-(E)-butenyl 4-diphosphate. The protein is 4-hydroxy-3-methylbut-2-en-1-yl diphosphate synthase (ferredoxin) of Synechococcus elongatus (strain ATCC 33912 / PCC 7942 / FACHB-805) (Anacystis nidulans R2).